We begin with the raw amino-acid sequence, 337 residues long: Na(+)/H(+) exchange regulatory cofactor NHE-RF2 (337 aa).

The PDZ 1 domain maps to 11 to 91; it reads LCRLVRGEQG…QTQLLVVDKE (81 aa). Positions 112–145 are disordered; the sequence is LPPAHNPWEPKPDWACSGSLGSDTGQKDVNGPPR. S130, S183, S186, S254, S269, S280, and S303 each carry phosphoserine. The PDZ 2 domain occupies 151-231; that stretch reads LCHLRRGPQG…EARLLVVDPE (81 aa). The interval 242-337 is disordered; the sequence is VPTEEHVEGP…NRKREIFSNF (96 aa). A compositionally biased stretch (polar residues) spans 255 to 275; it reads PVTNGTSPAQLNGGSVCSSRS. Positions 327-337 are enriched in basic and acidic residues; it reads WNRKREIFSNF.

As to quaternary structure, homodimer, and heterodimer with NHERF1. Binds PDZK1. Interacts with SRY. Binds ADRB2, SLC9A3, P2RY1, P2YR2, RDX and LPAR2. Interacts with MCC. Found in a complex with EZR, PODXL and NHERF2. Interacts (via the PDZ domains) with PODXL (via the C-terminal PDZ-binding motif DTHL); interaction is detected in glomerular epithelium cells. Interacts with SGK1 and KCNJ1/ROMK1. Interacts (via the PDZ domains) with SLC26A6.

Its subcellular location is the endomembrane system. It is found in the nucleus. The protein resides in the apical cell membrane. Scaffold protein that connects plasma membrane proteins with members of the ezrin/moesin/radixin family and thereby helps to link them to the actin cytoskeleton and to regulate their surface expression. Necessary for cAMP-mediated phosphorylation and inhibition of SLC9A3. May also act as scaffold protein in the nucleus. The chain is Na(+)/H(+) exchange regulatory cofactor NHE-RF2 (Nherf2) from Mus musculus (Mouse).